A 734-amino-acid chain; its full sequence is Photosystem I P700 chlorophyll a apoprotein A2 (734 aa).

8 helical membrane-spanning segments follow: residues 46 to 69, 135 to 158, 175 to 199, 273 to 291, 330 to 353, 369 to 395, 417 to 439, and 517 to 535; these read IFAS…FHVA, LYTG…LHLQ, LNHH…HVAI, IAHH…GHMY, IHFQ…QHMY, AALY…IFFI, AIIS…LYVH, and FLVH…LILV. The [4Fe-4S] cluster site is built by C559 and C568. The next 2 membrane-spanning stretches (helical) occupy residues 575-596 and 643-665; these read AFYL…YWHW and LSVW…MFLI. Chlorophyll a contacts are provided by H654, M662, and Y670. W671 serves as a coordination point for phylloquinone. Residues 707 to 727 traverse the membrane as a helical segment; that stretch reads LVGLAHFSVGYIFTYAAFLIA.

Belongs to the PsaA/PsaB family. In terms of assembly, the PsaA/B heterodimer binds the P700 chlorophyll special pair and subsequent electron acceptors. PSI consists of a core antenna complex that captures photons, and an electron transfer chain that converts photonic excitation into a charge separation. The eukaryotic PSI reaction center is composed of at least 11 subunits. P700 is a chlorophyll a/chlorophyll a' dimer, A0 is one or more chlorophyll a, A1 is one or both phylloquinones and FX is a shared 4Fe-4S iron-sulfur center. serves as cofactor.

It is found in the plastid. It localises to the chloroplast thylakoid membrane. It carries out the reaction reduced [plastocyanin] + hnu + oxidized [2Fe-2S]-[ferredoxin] = oxidized [plastocyanin] + reduced [2Fe-2S]-[ferredoxin]. Its function is as follows. PsaA and PsaB bind P700, the primary electron donor of photosystem I (PSI), as well as the electron acceptors A0, A1 and FX. PSI is a plastocyanin-ferredoxin oxidoreductase, converting photonic excitation into a charge separation, which transfers an electron from the donor P700 chlorophyll pair to the spectroscopically characterized acceptors A0, A1, FX, FA and FB in turn. Oxidized P700 is reduced on the lumenal side of the thylakoid membrane by plastocyanin. The sequence is that of Photosystem I P700 chlorophyll a apoprotein A2 from Aethionema grandiflorum (Persian stone-cress).